Reading from the N-terminus, the 398-residue chain is Histidinol-phosphate aminotransferase (398 aa).

The segment covering 1–10 (MTGQRATPQP) has biased composition (polar residues). The tract at residues 1 to 30 (MTGQRATPQPTLDDLPLRDDLRGKSPYGAP) is disordered. The residue at position 234 (K234) is an N6-(pyridoxal phosphate)lysine.

The protein belongs to the class-II pyridoxal-phosphate-dependent aminotransferase family. Histidinol-phosphate aminotransferase subfamily. As to quaternary structure, homodimer. Requires pyridoxal 5'-phosphate as cofactor.

It catalyses the reaction L-histidinol phosphate + 2-oxoglutarate = 3-(imidazol-4-yl)-2-oxopropyl phosphate + L-glutamate. It participates in amino-acid biosynthesis; L-histidine biosynthesis; L-histidine from 5-phospho-alpha-D-ribose 1-diphosphate: step 7/9. This chain is Histidinol-phosphate aminotransferase, found in Mycobacterium avium (strain 104).